Here is a 203-residue protein sequence, read N- to C-terminus: Glycerol-3-phosphate acyltransferase (203 aa).

5 consecutive transmembrane segments (helical) span residues 10–30 (LLAL…GLLI), 59–79 (PAAA…VILA), 87–107 (AAQI…YLKF), 116–136 (FFGT…AIWL), and 168–188 (LVVL…ENII).

This sequence belongs to the PlsY family. Probably interacts with PlsX.

The protein localises to the cell inner membrane. It carries out the reaction an acyl phosphate + sn-glycerol 3-phosphate = a 1-acyl-sn-glycero-3-phosphate + phosphate. Its pathway is lipid metabolism; phospholipid metabolism. Catalyzes the transfer of an acyl group from acyl-phosphate (acyl-PO(4)) to glycerol-3-phosphate (G3P) to form lysophosphatidic acid (LPA). This enzyme utilizes acyl-phosphate as fatty acyl donor, but not acyl-CoA or acyl-ACP. The sequence is that of Glycerol-3-phosphate acyltransferase from Dinoroseobacter shibae (strain DSM 16493 / NCIMB 14021 / DFL 12).